We begin with the raw amino-acid sequence, 185 residues long: Elongation factor P (185 aa).

It belongs to the elongation factor P family.

The protein resides in the cytoplasm. The protein operates within protein biosynthesis; polypeptide chain elongation. Involved in peptide bond synthesis. Stimulates efficient translation and peptide-bond synthesis on native or reconstituted 70S ribosomes in vitro. Probably functions indirectly by altering the affinity of the ribosome for aminoacyl-tRNA, thus increasing their reactivity as acceptors for peptidyl transferase. This chain is Elongation factor P, found in Clostridium novyi (strain NT).